A 326-amino-acid polypeptide reads, in one-letter code: N-acetyl-gamma-glutamyl-phosphate reductase (326 aa).

Cysteine 155 is an active-site residue.

The protein belongs to the NAGSA dehydrogenase family. Type 1 subfamily.

The protein resides in the cytoplasm. It catalyses the reaction N-acetyl-L-glutamate 5-semialdehyde + phosphate + NADP(+) = N-acetyl-L-glutamyl 5-phosphate + NADPH + H(+). Its pathway is amino-acid biosynthesis; L-arginine biosynthesis; N(2)-acetyl-L-ornithine from L-glutamate: step 3/4. Catalyzes the NADPH-dependent reduction of N-acetyl-5-glutamyl phosphate to yield N-acetyl-L-glutamate 5-semialdehyde. In Shewanella woodyi (strain ATCC 51908 / MS32), this protein is N-acetyl-gamma-glutamyl-phosphate reductase.